A 503-amino-acid chain; its full sequence is Beta-mannosyltransferase 4 (503 aa).

Residues 1–24 lie on the Cytoplasmic side of the membrane; sequence MKLDTQQISHLLSRQMYHLAPRKK. Residues 25-45 form a helical membrane-spanning segment; sequence LLIWGGSLGFVLLLLIVASSH. The Extracellular segment spans residues 46 to 503; sequence QRIRSTILHR…QYCQRYGELH (458 aa). A glycan (N-linked (GlcNAc...) asparagine) is linked at Asn-468.

Belongs to the BMT family.

It is found in the membrane. In terms of biological role, beta-mannosyltransferase involved in cell wall biosynthesis. Responsible for addition of a hexose to the beta-mannose chain. This Komagataella phaffii (strain ATCC 76273 / CBS 7435 / CECT 11047 / NRRL Y-11430 / Wegner 21-1) (Yeast) protein is Beta-mannosyltransferase 4 (BMT4).